A 155-amino-acid polypeptide reads, in one-letter code: 6,7-dimethyl-8-ribityllumazine synthase (155 aa).

5-amino-6-(D-ribitylamino)uracil contacts are provided by residues F24, 58–60 (AFE), and 82–84 (AII). 87 to 88 (ST) provides a ligand contact to (2S)-2-hydroxy-3-oxobutyl phosphate. The Proton donor role is filled by H90. Position 115 (F115) interacts with 5-amino-6-(D-ribitylamino)uracil. R129 is a (2S)-2-hydroxy-3-oxobutyl phosphate binding site.

This sequence belongs to the DMRL synthase family.

The catalysed reaction is (2S)-2-hydroxy-3-oxobutyl phosphate + 5-amino-6-(D-ribitylamino)uracil = 6,7-dimethyl-8-(1-D-ribityl)lumazine + phosphate + 2 H2O + H(+). It functions in the pathway cofactor biosynthesis; riboflavin biosynthesis; riboflavin from 2-hydroxy-3-oxobutyl phosphate and 5-amino-6-(D-ribitylamino)uracil: step 1/2. Functionally, catalyzes the formation of 6,7-dimethyl-8-ribityllumazine by condensation of 5-amino-6-(D-ribitylamino)uracil with 3,4-dihydroxy-2-butanone 4-phosphate. This is the penultimate step in the biosynthesis of riboflavin. The protein is 6,7-dimethyl-8-ribityllumazine synthase of Chlorobium phaeovibrioides (strain DSM 265 / 1930) (Prosthecochloris vibrioformis (strain DSM 265)).